A 239-amino-acid polypeptide reads, in one-letter code: uncharacterized protein (239 aa).

This is an uncharacterized protein from Escherichia coli O157:H7.